The sequence spans 126 residues: Large ribosomal subunit protein bL12 (126 aa).

The protein belongs to the bacterial ribosomal protein bL12 family. As to quaternary structure, homodimer. Part of the ribosomal stalk of the 50S ribosomal subunit. Forms a multimeric L10(L12)X complex, where L10 forms an elongated spine to which 2 to 4 L12 dimers bind in a sequential fashion. Binds GTP-bound translation factors.

In terms of biological role, forms part of the ribosomal stalk which helps the ribosome interact with GTP-bound translation factors. Is thus essential for accurate translation. The polypeptide is Large ribosomal subunit protein bL12 (Teredinibacter turnerae (strain ATCC 39867 / T7901)).